The following is a 336-amino-acid chain: Protease HtpX homolog (336 aa).

Transmembrane regions (helical) follow at residues 7–24 (AMLLAAMTALFMGVGFLI) and 29–48 (GMMIALLIAAGTNLFSYWNA). Residue His-130 coordinates Zn(2+). Residue Glu-131 is part of the active site. Position 134 (His-134) interacts with Zn(2+). 2 helical membrane-spanning segments follow: residues 145-165 (IVATFAGAISMLGNFAFFLGG) and 171-191 (PFGFVGVLAAMIVAPFAAMIV). Position 200 (Glu-200) interacts with Zn(2+). Positions 278–287 (QQMAGGTQAA) are enriched in low complexity. The segment at 278 to 336 (QQMAGGTQAAPRPTPRQAGEQQPSGPWGQAPQAEQPAEPERPKANPWGRNPTGPKGRWS) is disordered.

It belongs to the peptidase M48B family. It depends on Zn(2+) as a cofactor.

It is found in the cell inner membrane. This is Protease HtpX homolog from Mesorhizobium japonicum (strain LMG 29417 / CECT 9101 / MAFF 303099) (Mesorhizobium loti (strain MAFF 303099)).